Consider the following 264-residue polypeptide: MKQYLDLMRHVREHGTFKSDRTGTGTYSVFGHQMRFDLAAGFPLVTTKKCHLKSIVHELLWFLKGSTNIAYLKEHGVSIWDEWADENGDLGPVYGYQWRSWPAPDGRHIDQIANLMAMLKKNPDSRRLIVSAWNPALIDEMALPPCHALFQFYVADGKLSCQLYQRSADIFLGVPFNIASYALLTLMVAQVAGLQPGEFIWTGGDCHLYANHLEQADLQLTREPLPLPSMKLNPEVKDLFDFRFEDFELVGYEAHPHIKAPVAV.

Arginine 21 is a dUMP binding site. Histidine 51 serves as a coordination point for (6R)-5,10-methylene-5,6,7,8-tetrahydrofolate. 126-127 (RR) contacts dUMP. Catalysis depends on cysteine 146, which acts as the Nucleophile. Residues 166 to 169 (RSAD), asparagine 177, and 207 to 209 (HLY) contribute to the dUMP site. Residue aspartate 169 participates in (6R)-5,10-methylene-5,6,7,8-tetrahydrofolate binding. Residue alanine 263 participates in (6R)-5,10-methylene-5,6,7,8-tetrahydrofolate binding.

This sequence belongs to the thymidylate synthase family. Bacterial-type ThyA subfamily. As to quaternary structure, homodimer.

The protein localises to the cytoplasm. It carries out the reaction dUMP + (6R)-5,10-methylene-5,6,7,8-tetrahydrofolate = 7,8-dihydrofolate + dTMP. The protein operates within pyrimidine metabolism; dTTP biosynthesis. In terms of biological role, catalyzes the reductive methylation of 2'-deoxyuridine-5'-monophosphate (dUMP) to 2'-deoxythymidine-5'-monophosphate (dTMP) while utilizing 5,10-methylenetetrahydrofolate (mTHF) as the methyl donor and reductant in the reaction, yielding dihydrofolate (DHF) as a by-product. This enzymatic reaction provides an intracellular de novo source of dTMP, an essential precursor for DNA biosynthesis. This is Thymidylate synthase from Pseudomonas aeruginosa (strain LESB58).